Consider the following 583-residue polypeptide: Aspartate--tRNA ligase (583 aa).

L-aspartate is bound at residue Glu-174. Residues 198-201 (QITK) form an aspartate region. L-aspartate is bound at residue Arg-220. Residues 220–222 (RDE) and Gln-229 each bind ATP. His-443 contacts L-aspartate. Residue Glu-477 participates in ATP binding. An L-aspartate-binding site is contributed by Arg-484. 529-532 (GLDR) provides a ligand contact to ATP.

Belongs to the class-II aminoacyl-tRNA synthetase family. Type 1 subfamily. In terms of assembly, homodimer.

Its subcellular location is the cytoplasm. It catalyses the reaction tRNA(Asp) + L-aspartate + ATP = L-aspartyl-tRNA(Asp) + AMP + diphosphate. In terms of biological role, catalyzes the attachment of L-aspartate to tRNA(Asp) in a two-step reaction: L-aspartate is first activated by ATP to form Asp-AMP and then transferred to the acceptor end of tRNA(Asp). This Streptococcus thermophilus (strain ATCC BAA-250 / LMG 18311) protein is Aspartate--tRNA ligase.